Reading from the N-terminus, the 141-residue chain is HTH-type transcriptional repressor NsrR (141 aa).

Positions 2–129 constitute an HTH rrf2-type domain; it reads QLTSFTDYGL…DNYTLADMVK (128 aa). The segment at residues 28–51 is a DNA-binding region (H-T-H motif); it reads ISQVTEVYGVSRNHMVKIINQLSR. Residues Cys91, Cys96, and Cys102 each coordinate [2Fe-2S] cluster.

[2Fe-2S] cluster is required as a cofactor.

Functionally, nitric oxide-sensitive repressor of genes involved in protecting the cell against nitrosative stress. May require iron for activity. The chain is HTH-type transcriptional repressor NsrR from Yersinia pseudotuberculosis serotype O:1b (strain IP 31758).